We begin with the raw amino-acid sequence, 334 residues long: Malate dehydrogenase, cytoplasmic (334 aa).

N-acetylserine is present on Ser2. Residues Gly11–Ala17 and Asp42 contribute to the NAD(+) site. 2 residues coordinate substrate: Arg92 and Arg98. Asn105 is an NAD(+) binding site. Lys110 carries the N6-succinyllysine modification. Residue Gln112 coordinates NAD(+). N6-acetyllysine is present on residues Lys118 and Lys121. An NAD(+)-binding site is contributed by Val129–Asn131. Residues Asn131 and Arg162 each contribute to the substrate site. Residue His187 is the Proton acceptor of the active site. Lys214 is modified (N6-succinyllysine). Position 217 is a phosphoserine (Ser217). Omega-N-methylarginine is present on Arg230. Ser241 carries the post-translational modification Phosphoserine. Lys298 is modified (N6-acetyllysine; alternate). At Lys298 the chain carries N6-succinyllysine; alternate. Ser309 is subject to Phosphoserine. The residue at position 318 (Lys318) is an N6-succinyllysine. 2 positions are modified to phosphoserine: Ser332 and Ser333.

Belongs to the LDH/MDH superfamily. MDH type 2 family. As to quaternary structure, homodimer. ISGylated. Post-translationally, acetylation at Lys-118 dramatically enhances enzymatic activity and promotes adipogenic differentiation.

It localises to the cytoplasm. It is found in the cytosol. It catalyses the reaction (S)-malate + NAD(+) = oxaloacetate + NADH + H(+). It carries out the reaction (2R)-2-hydroxy-3-(4-hydroxyphenyl)propanoate + NAD(+) = 3-(4-hydroxyphenyl)pyruvate + NADH + H(+). The enzyme catalyses (S)-2-hydroxyglutarate + NAD(+) = 2-oxoglutarate + NADH + H(+). Functionally, catalyzes the reduction of aromatic alpha-keto acids in the presence of NADH. Plays essential roles in the malate-aspartate shuttle and the tricarboxylic acid cycle, important in mitochondrial NADH supply for oxidative phosphorylation. Catalyzes the reduction of 2-oxoglutarate to 2-hydroxyglutarate, leading to elevated reactive oxygen species (ROS). In Felis catus (Cat), this protein is Malate dehydrogenase, cytoplasmic (MDH1).